The following is a 423-amino-acid chain: Gamma-glutamyl phosphate reductase (423 aa).

The protein belongs to the gamma-glutamyl phosphate reductase family.

Its subcellular location is the cytoplasm. The enzyme catalyses L-glutamate 5-semialdehyde + phosphate + NADP(+) = L-glutamyl 5-phosphate + NADPH + H(+). It functions in the pathway amino-acid biosynthesis; L-proline biosynthesis; L-glutamate 5-semialdehyde from L-glutamate: step 2/2. Its function is as follows. Catalyzes the NADPH-dependent reduction of L-glutamate 5-phosphate into L-glutamate 5-semialdehyde and phosphate. The product spontaneously undergoes cyclization to form 1-pyrroline-5-carboxylate. This chain is Gamma-glutamyl phosphate reductase, found in Pseudomonas fluorescens (strain Pf0-1).